A 738-amino-acid chain; its full sequence is 1,4-alpha-glucan branching enzyme GlgB (738 aa).

Aspartate 399 (nucleophile) is an active-site residue. The active-site Proton donor is glutamate 452.

The protein belongs to the glycosyl hydrolase 13 family. GlgB subfamily. As to quaternary structure, monomer.

It catalyses the reaction Transfers a segment of a (1-&gt;4)-alpha-D-glucan chain to a primary hydroxy group in a similar glucan chain.. Its pathway is glycan biosynthesis; glycogen biosynthesis. Functionally, catalyzes the formation of the alpha-1,6-glucosidic linkages in glycogen by scission of a 1,4-alpha-linked oligosaccharide from growing alpha-1,4-glucan chains and the subsequent attachment of the oligosaccharide to the alpha-1,6 position. This chain is 1,4-alpha-glucan branching enzyme GlgB, found in Chlamydia trachomatis serovar L2b (strain UCH-1/proctitis).